The chain runs to 1096 residues: Serine-repeat antigen protein 3 (1096 aa).

The N-terminal stretch at 1–21 (MARLSSIVFIICLLLCNNAIS) is a signal peptide. The disordered stretch occupies residues 28–205 (PSSGGTLSGG…RSPPPQVNNI (178 aa)). The segment covering 77 to 97 (NSDSTGDSSLGSTGSNGSQPA) has biased composition (low complexity). The N-linked (GlcNAc...) asparagine glycan is linked to asparagine 92. A compositionally biased stretch (basic and acidic residues) spans 102 to 113 (KEPEPTTPKEPE). Positions 123 to 147 (VTPQKTAETASGKQVSPTPSENPPS) are enriched in polar residues. The span at 149–161 (DTPKPESSSEKKV) shows a compositional bias: basic and acidic residues. 8 N-linked (GlcNAc...) asparagine glycosylation sites follow: asparagine 204, asparagine 607, asparagine 637, asparagine 662, asparagine 671, asparagine 712, asparagine 892, and asparagine 951. Disordered stretches follow at residues 916–952 (EAKNDDENDQNYGNLDVSGQSENHQNDPKNPQPQANS) and 964–1006 (NQRT…ASAN). Polar residues-rich tracts occupy residues 925 to 952 (QNYGNLDVSGQSENHQNDPKNPQPQANS) and 964 to 975 (NQRTADSNPNAQ). Over residues 976–1006 (STPSPNTTVTDTVNSNTANSNTANSNTASAN) the composition is skewed to low complexity. N-linked (GlcNAc...) asparagine glycosylation is found at asparagine 981 and asparagine 1039.

It belongs to the peptidase C1 family. Post-translationally, proteolytically cleaved in both blood and liver stage parasites. Precursor of 130 kDa is processed into 72 kDa and 55 kDa forms. Proteolytically cleaved by SUB1.

It is found in the cell membrane. The protein localises to the parasitophorous vacuole. It localises to the secreted. The protein resides in the host cytoplasm. Functionally, putative cysteine protease. Probably involved in merozoite release from the parasitophorous vacuole during liver stages. The protein is Serine-repeat antigen protein 3 of Plasmodium berghei (strain Anka).